The primary structure comprises 854 residues: Protein ROOT HAIR DEFECTIVE 3 homolog 1 (854 aa).

The Cytoplasmic portion of the chain corresponds to methionine 1–leucine 680. A GB1/RHD3-type G domain is found at glycine 37–arginine 252. Glycine 47–serine 54 provides a ligand contact to GTP. The stretch at alanine 217 to serine 242 forms a coiled coil. Residues proline 681–leucine 701 traverse the membrane as a helical segment. Topologically, residues arginine 702–proline 704 are lumenal. Residues isoleucine 705 to aspartate 725 form a helical membrane-spanning segment. At isoleucine 726–valine 854 the chain is on the cytoplasmic side. Low complexity-rich tracts occupy residues threonine 758–proline 781 and valine 814–proline 828. The tract at residues threonine 758–valine 854 is disordered. A compositionally biased stretch (polar residues) spans glutamine 842–valine 854.

This sequence belongs to the TRAFAC class dynamin-like GTPase superfamily. GB1/RHD3 GTPase family. RHD3 subfamily.

It is found in the endoplasmic reticulum membrane. Its function is as follows. Probable GTP-binding protein that may be involved in cell development. This chain is Protein ROOT HAIR DEFECTIVE 3 homolog 1, found in Oryza sativa subsp. japonica (Rice).